A 228-amino-acid polypeptide reads, in one-letter code: 2,3-bisphosphoglycerate-dependent phosphoglycerate mutase (228 aa).

Substrate contacts are provided by residues Arg-8 to Asn-15, Thr-21 to Gly-22, Arg-60, Glu-87 to Tyr-90, Lys-98, Arg-114 to Arg-115, and Gly-183 to Asn-184. Catalysis depends on His-9, which acts as the Tele-phosphohistidine intermediate. Residue Glu-87 is the Proton donor/acceptor of the active site.

This sequence belongs to the phosphoglycerate mutase family. BPG-dependent PGAM subfamily.

It catalyses the reaction (2R)-2-phosphoglycerate = (2R)-3-phosphoglycerate. It participates in carbohydrate degradation; glycolysis; pyruvate from D-glyceraldehyde 3-phosphate: step 3/5. Its function is as follows. Catalyzes the interconversion of 2-phosphoglycerate and 3-phosphoglycerate. In Staphylococcus aureus (strain MRSA252), this protein is 2,3-bisphosphoglycerate-dependent phosphoglycerate mutase.